Consider the following 265-residue polypeptide: 4-hydroxy-tetrahydrodipicolinate reductase (265 aa).

Residues 7 to 12 (GASGRM) and D33 contribute to the NAD(+) site. Residue R34 participates in NADP(+) binding. NAD(+)-binding positions include 96 to 98 (GTT) and 120 to 123 (AANM). The active-site Proton donor/acceptor is the H153. H154 contributes to the (S)-2,3,4,5-tetrahydrodipicolinate binding site. The active-site Proton donor is K157. 163 to 164 (GT) is a binding site for (S)-2,3,4,5-tetrahydrodipicolinate.

This sequence belongs to the DapB family.

The protein resides in the cytoplasm. The enzyme catalyses (S)-2,3,4,5-tetrahydrodipicolinate + NAD(+) + H2O = (2S,4S)-4-hydroxy-2,3,4,5-tetrahydrodipicolinate + NADH + H(+). It carries out the reaction (S)-2,3,4,5-tetrahydrodipicolinate + NADP(+) + H2O = (2S,4S)-4-hydroxy-2,3,4,5-tetrahydrodipicolinate + NADPH + H(+). It participates in amino-acid biosynthesis; L-lysine biosynthesis via DAP pathway; (S)-tetrahydrodipicolinate from L-aspartate: step 4/4. Its function is as follows. Catalyzes the conversion of 4-hydroxy-tetrahydrodipicolinate (HTPA) to tetrahydrodipicolinate. In Burkholderia cenocepacia (strain ATCC BAA-245 / DSM 16553 / LMG 16656 / NCTC 13227 / J2315 / CF5610) (Burkholderia cepacia (strain J2315)), this protein is 4-hydroxy-tetrahydrodipicolinate reductase.